The chain runs to 579 residues: Glutamine--tRNA ligase (579 aa).

Positions 41–51 (PEPNGYLHIGH) match the 'HIGH' region motif. ATP contacts are provided by residues 42 to 44 (EPN) and 48 to 54 (HIGHAKA). 2 residues coordinate L-glutamine: Asp74 and Tyr218. Residues Thr237, 285-286 (RL), and 293-295 (MSK) contribute to the ATP site. The 'KMSKS' region motif lies at 292–296 (VMSKR).

The protein belongs to the class-I aminoacyl-tRNA synthetase family. In terms of assembly, monomer.

The protein resides in the cytoplasm. It catalyses the reaction tRNA(Gln) + L-glutamine + ATP = L-glutaminyl-tRNA(Gln) + AMP + diphosphate. The protein is Glutamine--tRNA ligase of Xanthomonas oryzae pv. oryzae (strain MAFF 311018).